A 373-amino-acid chain; its full sequence is Cobalt-precorrin-5B C(1)-methyltransferase (373 aa).

It belongs to the CbiD family.

The catalysed reaction is Co-precorrin-5B + S-adenosyl-L-methionine = Co-precorrin-6A + S-adenosyl-L-homocysteine. It participates in cofactor biosynthesis; adenosylcobalamin biosynthesis; cob(II)yrinate a,c-diamide from sirohydrochlorin (anaerobic route): step 6/10. Functionally, catalyzes the methylation of C-1 in cobalt-precorrin-5B to form cobalt-precorrin-6A. The chain is Cobalt-precorrin-5B C(1)-methyltransferase from Polaromonas sp. (strain JS666 / ATCC BAA-500).